The primary structure comprises 798 residues: Pentatricopeptide repeat-containing protein At5g67570, chloroplastic (798 aa).

Disordered stretches follow at residues 1-21 (MDAS…EFEP) and 50-73 (IQKH…EAQK). 10 PPR repeats span residues 254–284 (SRFV…MLGD), 290–324 (DMAA…PTKL), 340–374 (DLVV…GLRP), 375–409 (NGAT…GEAP), 410–444 (KAIT…GVIG), 445–480 (TGSV…NCRP), 481–511 (LEIT…MKDK), 515–545 (NIGT…IVSR), 553–587 (NEYT…GYQM), and 588–622 (DQTK…GEIP).

It belongs to the PPR family. P subfamily. In terms of assembly, interacts (via C-terminus) with SIGF (via N-terminus).

The protein localises to the plastid. It is found in the chloroplast. Functionally, involved in the regulation of early chloroplast development and chloroplast gene expression in a SIGF-dependent manner. In Arabidopsis thaliana (Mouse-ear cress), this protein is Pentatricopeptide repeat-containing protein At5g67570, chloroplastic (DG1).